The primary structure comprises 458 residues: MSKDKLWGGRFTQPTDKFVEEFTASIDFDKRLYHQDIRGSIAHARMLGKQRIIPMEDVEKIVHGLQEILDQIEAGKFDFSISLEDIHMNIESRLSAKIGEAGKRLHTGRSRNDQVALDIRLYLRDELVEISAYLDLLVDSLLTQAEKNIDVIMPGYTHLQTAQPILFAHHMLAYVEMFKRDKGRMEDCLKRTNILPLGAGALAGTTFPIDREHVAELLDFPEVTRNSLDSVSDRDFALEFLADASILMMHLSRFSEELILWSTSEFKFIDLSDGFCTGSSIMPQKKNPDVPELVRGKTGRVYGNLMALLTVMKSLPLAYNKDMQEDKEPLFDTIDTVKGSLKIFADMIREMQVNTDTMRNAAAKGFSTATDVADYLVRKGMPFRDAHEVVGKSVAYCIANKKDLPELAIEEWKGFSPMIDTDIYEAITLEASVNARRATGGTSLEGVKREIARVRAGK.

This sequence belongs to the lyase 1 family. Argininosuccinate lyase subfamily.

It is found in the cytoplasm. It catalyses the reaction 2-(N(omega)-L-arginino)succinate = fumarate + L-arginine. Its pathway is amino-acid biosynthesis; L-arginine biosynthesis; L-arginine from L-ornithine and carbamoyl phosphate: step 3/3. This is Argininosuccinate lyase from Geotalea daltonii (strain DSM 22248 / JCM 15807 / FRC-32) (Geobacter daltonii).